The primary structure comprises 647 residues: Leucine-rich repeat and WD repeat-containing protein 1 (647 aa).

LRR repeat units lie at residues 22–43, 48–69, 70–91, and 92–113; these read KIRS…PKLL, QLQE…LGLS, HLRV…CQFP, and KLEE…LKVS. Residues 204-267 are disordered; that stretch reads RTQVQKANSP…GSPVAGSDGS (64 aa). A phosphoserine mark is found at serine 212, serine 243, serine 251, serine 259, and serine 264. WD repeat units follow at residues 282 to 335, 341 to 379, 383 to 422, 426 to 472, 484 to 526, 542 to 582, and 598 to 646; these read HSKN…LHKY, EFFS…LLHV, FCCG…LWDI, NQDY…CWDV, EVEF…LWSW, VVLA…LYDV, and APTQ…IWGR.

Belongs to the LRWD1 family. As to quaternary structure, integral component of the ORC complex. Directly interacts with CDT1, GMNN and ORC2. Interacts with ORC2 only when non-ubiquitinated; this interaction prevents LRWD1 ubiquitination and degradation. Some of these interactions are regulated in a cell-cycle dependent manner. Interaction with ORC1 occurs predominantly during G1. Association with phosphorylated ORC1 during mitosis is not efficient. Interaction with CDT1 occurs during G1 phase, as well as during mitosis with phosphorylated CDT1. Interaction with GMNN occurs from G1/S to mitosis. Interaction with ORC2 is observed throughout the cell cycle. The stoichiometry of the ORCA/ORC/CDT1/GMNN complex is 1:1:1:2. Interacts with CUL4A and DDB1; this interaction may lead to ubiquitination. In terms of processing, ubiquitinated; undergoes 'Lys-48'-linked polyubiquitination leading to proteasomal degradation. Ubiquitination occurs within the WD repeats at the end of the G1 phase. Ubiquitination may be catalyzed by the CUL4-DDB1 E3 ubiquitin-protein ligase complex and other E3 ligases. In terms of tissue distribution, testis-specific. Drastically down-regulated in testis from patients with Sertoli cell-only syndrome (SCOS).

It is found in the nucleus. It localises to the chromosome. The protein localises to the centromere. Its subcellular location is the telomere. The protein resides in the cytoplasm. It is found in the cytoskeleton. It localises to the microtubule organizing center. The protein localises to the centrosome. Its subcellular location is the kinetochore. Functionally, required for G1/S transition. Recruits and stabilizes the origin recognition complex (ORC) onto chromatin during G1 to establish pre-replication complex (preRC) and to heterochromatic sites in post-replicated cells. Binds a combination of DNA and histone methylation repressive marks on heterochromatin. Binds histone H3 and H4 trimethylation marks H3K9me3, H3K27me3 and H4K20me3 in a cooperative manner with DNA methylation. Required for silencing of major satellite repeats. May be important ORC2, ORC3 and ORC4 stability. The polypeptide is Leucine-rich repeat and WD repeat-containing protein 1 (LRWD1) (Homo sapiens (Human)).